Reading from the N-terminus, the 421-residue chain is UDP-N-acetylglucosamine 1-carboxyvinyltransferase (421 aa).

22-23 provides a ligand contact to phosphoenolpyruvate; that stretch reads KN. Arg93 is a UDP-N-acetyl-alpha-D-glucosamine binding site. Residue Cys117 is the Proton donor of the active site. Cys117 carries the 2-(S-cysteinyl)pyruvic acid O-phosphothioketal modification. Residues 122-126, Asp308, and Ile330 each bind UDP-N-acetyl-alpha-D-glucosamine; that span reads RPVDL.

Belongs to the EPSP synthase family. MurA subfamily.

The protein localises to the cytoplasm. The catalysed reaction is phosphoenolpyruvate + UDP-N-acetyl-alpha-D-glucosamine = UDP-N-acetyl-3-O-(1-carboxyvinyl)-alpha-D-glucosamine + phosphate. It functions in the pathway cell wall biogenesis; peptidoglycan biosynthesis. Cell wall formation. Adds enolpyruvyl to UDP-N-acetylglucosamine. The sequence is that of UDP-N-acetylglucosamine 1-carboxyvinyltransferase from Pseudomonas putida (strain W619).